The primary structure comprises 381 residues: 1-deoxy-D-xylulose 5-phosphate reductoisomerase (381 aa).

The NADPH site is built by T10, G11, S12, I13, N38, and N121. K122 serves as a coordination point for 1-deoxy-D-xylulose 5-phosphate. E123 provides a ligand contact to NADPH. Residue D147 coordinates Mn(2+). 4 residues coordinate 1-deoxy-D-xylulose 5-phosphate: S148, E149, S173, and H196. E149 is a binding site for Mn(2+). Position 202 (G202) interacts with NADPH. 4 residues coordinate 1-deoxy-D-xylulose 5-phosphate: S209, N214, K215, and E218. E218 serves as a coordination point for Mn(2+).

This sequence belongs to the DXR family. Requires Mg(2+) as cofactor. It depends on Mn(2+) as a cofactor.

It carries out the reaction 2-C-methyl-D-erythritol 4-phosphate + NADP(+) = 1-deoxy-D-xylulose 5-phosphate + NADPH + H(+). The protein operates within isoprenoid biosynthesis; isopentenyl diphosphate biosynthesis via DXP pathway; isopentenyl diphosphate from 1-deoxy-D-xylulose 5-phosphate: step 1/6. Catalyzes the NADPH-dependent rearrangement and reduction of 1-deoxy-D-xylulose-5-phosphate (DXP) to 2-C-methyl-D-erythritol 4-phosphate (MEP). The chain is 1-deoxy-D-xylulose 5-phosphate reductoisomerase from Alkaliphilus oremlandii (strain OhILAs) (Clostridium oremlandii (strain OhILAs)).